Here is a 395-residue protein sequence, read N- to C-terminus: Probable alcohol dehydrogenase EutG (395 aa).

Residues Asp-57, 116-120, 156-160, Lys-178, and 197-201 each bind NAD(+); these read GSVLD, TTAGT, and VTEGV. Fe cation is bound by residues Asp-212, His-216, His-281, and His-295. NAD(+) contacts are provided by His-295 and Asp-354.

The protein belongs to the iron-containing alcohol dehydrogenase family. The cofactor is Fe cation.

The protein resides in the bacterial microcompartment. The catalysed reaction is ethanol + NAD(+) = acetaldehyde + NADH + H(+). It functions in the pathway amine and polyamine degradation; ethanolamine degradation. Probably acts on the acetaldehyde produced by the degradation of ethanolamine, producing ethanol. In terms of biological role, expression of the eut operon allows this bacteria to use ethanolamine (EA) as a carbon, nitrogen and energy source. It relies on cobalamin (vitamin B12) both as a cofactor for the ethanolamine ammonia-lyase (EAL) activity and to induce the operon. EA enhances bacterial survival in macrophages in a concentration-dependent manner, suggesting it is an important nutrient during infection. The chain is Probable alcohol dehydrogenase EutG from Salmonella typhimurium (strain LT2 / SGSC1412 / ATCC 700720).